A 374-amino-acid polypeptide reads, in one-letter code: Anhydro-N-acetylmuramic acid kinase (374 aa).

12–19 contacts ATP; the sequence is GTSLDGID.

This sequence belongs to the anhydro-N-acetylmuramic acid kinase family.

The catalysed reaction is 1,6-anhydro-N-acetyl-beta-muramate + ATP + H2O = N-acetyl-D-muramate 6-phosphate + ADP + H(+). The protein operates within amino-sugar metabolism; 1,6-anhydro-N-acetylmuramate degradation. It participates in cell wall biogenesis; peptidoglycan recycling. Catalyzes the specific phosphorylation of 1,6-anhydro-N-acetylmuramic acid (anhMurNAc) with the simultaneous cleavage of the 1,6-anhydro ring, generating MurNAc-6-P. Is required for the utilization of anhMurNAc either imported from the medium or derived from its own cell wall murein, and thus plays a role in cell wall recycling. In Sodalis glossinidius (strain morsitans), this protein is Anhydro-N-acetylmuramic acid kinase.